The primary structure comprises 118 residues: Large ribosomal subunit protein bL19 (118 aa).

The protein belongs to the bacterial ribosomal protein bL19 family.

In terms of biological role, this protein is located at the 30S-50S ribosomal subunit interface and may play a role in the structure and function of the aminoacyl-tRNA binding site. In Campylobacter jejuni subsp. jejuni serotype O:2 (strain ATCC 700819 / NCTC 11168), this protein is Large ribosomal subunit protein bL19.